The following is a 164-amino-acid chain: Transcription elongation factor GreA (164 aa).

Residues 50 to 76 (YHAAREEQGQQEARIRQLQELLNNAKV) are a coiled coil.

This sequence belongs to the GreA/GreB family.

In terms of biological role, necessary for efficient RNA polymerase transcription elongation past template-encoded arresting sites. The arresting sites in DNA have the property of trapping a certain fraction of elongating RNA polymerases that pass through, resulting in locked ternary complexes. Cleavage of the nascent transcript by cleavage factors such as GreA or GreB allows the resumption of elongation from the new 3'terminus. GreA releases sequences of 2 to 3 nucleotides. This is Transcription elongation factor GreA from Mycobacteroides abscessus (strain ATCC 19977 / DSM 44196 / CCUG 20993 / CIP 104536 / JCM 13569 / NCTC 13031 / TMC 1543 / L948) (Mycobacterium abscessus).